The primary structure comprises 293 residues: Bifunctional protein FolD (293 aa).

NADP(+)-binding positions include 164 to 166 (GRS), serine 193, and threonine 234.

This sequence belongs to the tetrahydrofolate dehydrogenase/cyclohydrolase family. In terms of assembly, homodimer.

The catalysed reaction is (6R)-5,10-methylene-5,6,7,8-tetrahydrofolate + NADP(+) = (6R)-5,10-methenyltetrahydrofolate + NADPH. The enzyme catalyses (6R)-5,10-methenyltetrahydrofolate + H2O = (6R)-10-formyltetrahydrofolate + H(+). It participates in one-carbon metabolism; tetrahydrofolate interconversion. In terms of biological role, catalyzes the oxidation of 5,10-methylenetetrahydrofolate to 5,10-methenyltetrahydrofolate and then the hydrolysis of 5,10-methenyltetrahydrofolate to 10-formyltetrahydrofolate. This chain is Bifunctional protein FolD, found in Azobacteroides pseudotrichonymphae genomovar. CFP2.